The primary structure comprises 667 residues: Endogenous retrovirus group K member 5 Gag polyprotein (667 aa).

Glycine 2 carries N-myristoyl glycine lipidation. The segment at 166-188 (KGPELVGPSESKPRGPSPLPAGQ) is disordered. 2 CCHC-type zinc fingers span residues 543 to 560 (KKCY…SCPV) and 580 to 597 (GLCP…QCHS). Positions 598-667 (KFDKDGQPLS…CPAPQQAAPQ (70 aa)) are disordered. Residues 648-667 (GVSQLQQSNSCPAPQQAAPQ) are compositionally biased toward polar residues.

Belongs to the beta type-B retroviral Gag protein family. HERV class-II K(HML-2) gag subfamily. In terms of processing, myristoylation is essential for retroviral assembly. Alteration of the glycine residue leads to a block in the budding of particles and an accumulation of Gag inside the cell. Specific enzymatic cleavages may yield mature proteins.

It is found in the cell membrane. In terms of biological role, the products of the Gag polyproteins of infectious retroviruses perform highly complex orchestrated tasks during the assembly, budding, maturation, and infection stages of the viral replication cycle. During viral assembly, the proteins form membrane associations and self-associations that ultimately result in budding of an immature virion from the infected cell. Gag precursors also function during viral assembly to selectively bind and package two plus strands of genomic RNA. Endogenous Gag proteins may have kept, lost or modified their original function during evolution. This Homo sapiens (Human) protein is Endogenous retrovirus group K member 5 Gag polyprotein (ERVK-5).